Consider the following 171-residue polypeptide: Putative adenylate kinase (171 aa).

Residues Gly-9, Gly-11, Lys-12, Thr-13, and Thr-14 each contribute to the ATP site. The tract at residues Ser-28–Ala-51 is NMP. The interval Gly-99–Glu-109 is LID. Residue Arg-100 coordinates ATP.

It belongs to the adenylate kinase family. AK6 subfamily. In terms of assembly, interacts with uS11. Not a structural component of 40S pre-ribosomes, but transiently interacts with them by binding to uS11.

The enzyme catalyses AMP + ATP = 2 ADP. It carries out the reaction ATP + H2O = ADP + phosphate + H(+). Its function is as follows. Broad-specificity nucleoside monophosphate (NMP) kinase that catalyzes the reversible transfer of the terminal phosphate group between nucleoside triphosphates and monophosphates. Also has ATPase activity. Involved in the late maturation steps of the 30S ribosomal particles, specifically 16S rRNA maturation. While NMP activity is not required for ribosome maturation, ATPase activity is. Associates transiently with small ribosomal subunit protein uS11. ATP hydrolysis breaks the interaction with uS11. May temporarily remove uS11 from the ribosome to enable a conformational change of the ribosomal RNA that is needed for the final maturation step of the small ribosomal subunit. In Methanothermobacter thermautotrophicus (strain ATCC 29096 / DSM 1053 / JCM 10044 / NBRC 100330 / Delta H) (Methanobacterium thermoautotrophicum), this protein is Putative adenylate kinase.